The sequence spans 295 residues: Ethanolamine ammonia-lyase small subunit (295 aa).

The adenosylcob(III)alamin site is built by Val209 and Glu230.

Belongs to the EutC family. As to quaternary structure, the basic unit is a heterodimer which dimerizes to form tetramers. The heterotetramers trimerize; 6 large subunits form a core ring with 6 small subunits projecting outwards. It depends on adenosylcob(III)alamin as a cofactor.

The protein localises to the bacterial microcompartment. The enzyme catalyses ethanolamine = acetaldehyde + NH4(+). Its pathway is amine and polyamine degradation; ethanolamine degradation. In terms of biological role, catalyzes the deamination of various vicinal amino-alcohols to oxo compounds. Allows this organism to utilize ethanolamine as the sole source of nitrogen and carbon in the presence of external vitamin B12. This is Ethanolamine ammonia-lyase small subunit from Clostridium perfringens (strain ATCC 13124 / DSM 756 / JCM 1290 / NCIMB 6125 / NCTC 8237 / Type A).